A 176-amino-acid polypeptide reads, in one-letter code: RNA pyrophosphohydrolase (176 aa).

Residues 6 to 149 (GYRPNVGIVI…KRDVYRRVMK (144 aa)) form the Nudix hydrolase domain. Residues 38–59 (GGINPGESAEQAMYRELFEEVG) carry the Nudix box motif.

This sequence belongs to the Nudix hydrolase family. RppH subfamily. The cofactor is a divalent metal cation.

Accelerates the degradation of transcripts by removing pyrophosphate from the 5'-end of triphosphorylated RNA, leading to a more labile monophosphorylated state that can stimulate subsequent ribonuclease cleavage. This Shigella dysenteriae serotype 1 (strain Sd197) protein is RNA pyrophosphohydrolase.